The sequence spans 121 residues: MRWGFMKVAFLIFSYFHKNQPNMPVMMHTLLFANELKEKGDEVKIILEGEAVLWAKDLLSENHPLKSHFEKVKDDFVVCEACASMFNVKEEIKGKLKLENDLFGHVSLKKYLDGGYRIIEL.

This is an uncharacterized protein from Methanocaldococcus jannaschii (strain ATCC 43067 / DSM 2661 / JAL-1 / JCM 10045 / NBRC 100440) (Methanococcus jannaschii).